Reading from the N-terminus, the 314-residue chain is Large ribosomal subunit protein uL10 (314 aa).

The segment at 285–314 (GAAAGGAAAEEEKEEEEESDEEGGFGDLFG) is disordered. Residues 293–308 (AEEEKEEEEESDEEGG) are compositionally biased toward acidic residues. The residue at position 303 (serine 303) is a Phosphoserine; by CK1.

This sequence belongs to the universal ribosomal protein uL10 family. Component of the large ribosomal subunit. P0 forms a pentameric complex by interaction with dimers of P1 and P2. In terms of processing, phosphorylated.

In terms of biological role, ribosomal protein P0 is the functional equivalent of E.coli protein L10. The sequence is that of Large ribosomal subunit protein uL10 from Podospora anserina (Pleurage anserina).